The following is a 295-amino-acid chain: MNFQELILTLNKFWAEQNCIIQQPYDIEKGAGTMNPATFLRALGPEPWRVAYVEPSRRPTDGRYGENPNRLQHYFQYQVILKPSPDDVIPVYLDSLRAIGIDPDKHDIRFVEDNWESPTLGAWGLGWEVWLDGMEVTQFTYFQQCGGIDCHPVSAEITYGLERLAMFIQQKDSVYDITWVGDITYGDVYHQNEVEQSGYNFEVANTEMLFDLFDMYEAEANHILEKGLVLPAYDYVLKCSHTFNLLDARGAISVSERQGFIARVRQMARACAHAYVEQREKLGFPLLKKGGNING.

The protein belongs to the class-II aminoacyl-tRNA synthetase family. As to quaternary structure, tetramer of two alpha and two beta subunits.

Its subcellular location is the cytoplasm. It carries out the reaction tRNA(Gly) + glycine + ATP = glycyl-tRNA(Gly) + AMP + diphosphate. The sequence is that of Glycine--tRNA ligase alpha subunit from Desulforamulus reducens (strain ATCC BAA-1160 / DSM 100696 / MI-1) (Desulfotomaculum reducens).